The chain runs to 159 residues: Small ribosomal subunit protein uS9 (159 aa).

The protein belongs to the universal ribosomal protein uS9 family.

This chain is Small ribosomal subunit protein uS9, found in Bradyrhizobium diazoefficiens (strain JCM 10833 / BCRC 13528 / IAM 13628 / NBRC 14792 / USDA 110).